A 123-amino-acid chain; its full sequence is Small ribosomal subunit protein uS12 (123 aa).

A 3-methylthioaspartic acid modification is found at Asp-89.

It belongs to the universal ribosomal protein uS12 family. In terms of assembly, part of the 30S ribosomal subunit. Contacts proteins S8 and S17. May interact with IF1 in the 30S initiation complex.

Functionally, with S4 and S5 plays an important role in translational accuracy. Interacts with and stabilizes bases of the 16S rRNA that are involved in tRNA selection in the A site and with the mRNA backbone. Located at the interface of the 30S and 50S subunits, it traverses the body of the 30S subunit contacting proteins on the other side and probably holding the rRNA structure together. The combined cluster of proteins S8, S12 and S17 appears to hold together the shoulder and platform of the 30S subunit. This is Small ribosomal subunit protein uS12 from Pelagibacter ubique (strain HTCC1062).